The following is an 866-amino-acid chain: E3 ubiquitin-protein ligase RNF216 (866 aa).

3 disordered regions span residues 46–117 (LVTP…NPRS), 131–161 (YTES…SAAL), and 211–240 (EFPG…HPLG). The span at 55-76 (EEEDLDDDVILTEDDSEDDYGE) shows a compositional bias: acidic residues. Residues leucine 80, threonine 89, and lysine 100 each participate in a glycyl lysine isopeptide (Lys-Gly) (interchain with G-Cter in SUMO2) cross-link. A compositionally biased stretch (polar residues) spans 137–156 (LETQNQSSEDSETELLSNLG). Glycyl lysine isopeptide (Lys-Gly) (interchain with G-Cter in SUMO2) cross-links involve residues lysine 351 and lysine 354. At serine 419 the chain carries Phosphoserine. Glycyl lysine isopeptide (Lys-Gly) (interchain with G-Cter in SUMO2) cross-links involve residues lysine 425, lysine 430, lysine 448, lysine 459, and lysine 485. The stretch at 475 to 491 (VQQEQEFYEQKIKEMAE) forms a coiled coil. Residues 511–728 (QLIECRCCYG…SPGAPCQECS (218 aa)) are TRIAD supradomain. Positions 515, 518, 537, 540, 605, and 608 each coordinate Zn(2+). Residues 515-564 (CRCCYGEFPFEELTQCADAHLFCKECLIRYAQEAVFGSGKLELSCMEGSC) form an RING-type 1 zinc finger. The IBR-type zinc finger occupies 583–648 (YKYYERKAEE…LWKEHNGLTC (66 aa)). Lysine 619 is covalently cross-linked (Glycyl lysine isopeptide (Lys-Gly) (interchain with G-Cter in SUMO2)). Residues cysteine 623, cysteine 628, cysteine 633, cysteine 636, histidine 643, and cysteine 648 each coordinate Zn(2+). Residues lysine 658 and lysine 666 each participate in a glycyl lysine isopeptide (Lys-Gly) (interchain with G-Cter in SUMO2) cross-link. The Zn(2+) site is built by cysteine 675 and cysteine 678. The RING-type 2; atypical zinc finger occupies 675–703 (CHKCGTGLIKSEGCNRMSCRCGAQMCYLC). Cysteine 688 is a catalytic residue. Positions 693, 695, 700, 703, and 716 each coordinate Zn(2+). At serine 719 the chain carries Phosphoserine; by MAPK1. A Zn(2+)-binding site is contributed by cysteine 724. Positions 737–763 (TEDDEKLIEEIQKEAEEEQKRKNGENT) form a coiled coil. Glycyl lysine isopeptide (Lys-Gly) (interchain with G-Cter in SUMO2) cross-links involve residues lysine 765 and lysine 773.

Interacts with UBE2L3 and to some extent with UBE2L6. Interacts with TRAF3, TLR3, TLR4, TLR5 and TLR9. Isoform 3/ZIN binds RIPK1. As to quaternary structure, (Microbial infection) Isoform 3/ZIN binds RIPK1 and HIV Vif. Auto-ubiquitinated. Post-translationally, phosphorylation at Ser-719 enhances acceptor ubiquitin binding and chain-type specificity towards 'Lys-63' di-ubiquitin but not di-ubiquitin with other linkage types. Ubiquitous, with the highest levels of expression in testis and peripheral blood leukocytes.

Its subcellular location is the cytoplasm. The protein localises to the cytoplasmic vesicle. It is found in the clathrin-coated vesicle. It carries out the reaction S-ubiquitinyl-[E2 ubiquitin-conjugating enzyme]-L-cysteine + [acceptor protein]-L-lysine = [E2 ubiquitin-conjugating enzyme]-L-cysteine + N(6)-ubiquitinyl-[acceptor protein]-L-lysine.. It functions in the pathway protein modification; protein ubiquitination. Its activity is regulated as follows. Allosterically activated by 'Lys-63'-linked di-ubiquitin. E3 ubiquitin ligase which accepts ubiquitin from specific E2 ubiquitin-conjugating enzymes, and then transfers it to substrates promoting their ubiquitination. Plays a role in the regulation of antiviral responses by promoting the degradation of TRAF3, TLR4 and TLR9. In turn, down-regulates NF-kappa-B and IRF3 activation as well as beta interferon production. Also participates in the regulation of autophagy by ubiquitinating BECN1 leading to its degradation and autophagy inhibition. Plays a role in ARC-dependent synaptic plasticity by mediating ARC ubiquitination resulting in its rapid proteasomal degradation. Plays aso an essential role in spermatogenesis and male fertility. Mechanistically, regulates meiosis by promoting the degradation of PRKACB through the ubiquitin-mediated lysosome pathway. Modulates the gonadotropin-releasing hormone signal pathway by affecting the stability of STAU2 that is required for the microtubule-dependent transport of neuronal RNA from the cell body to the dendrite. Functionally, inhibits TNF and IL-1 mediated activation of NF-kappa-B. Promotes TNF and RIP mediated apoptosis. This is E3 ubiquitin-protein ligase RNF216 (RNF216) from Homo sapiens (Human).